Reading from the N-terminus, the 184-residue chain is ATP synthase subunit delta (184 aa).

It belongs to the ATPase delta chain family. As to quaternary structure, F-type ATPases have 2 components, F(1) - the catalytic core - and F(0) - the membrane proton channel. F(1) has five subunits: alpha(3), beta(3), gamma(1), delta(1), epsilon(1). F(0) has three main subunits: a(1), b(2) and c(10-14). The alpha and beta chains form an alternating ring which encloses part of the gamma chain. F(1) is attached to F(0) by a central stalk formed by the gamma and epsilon chains, while a peripheral stalk is formed by the delta and b chains.

It is found in the cell membrane. Its function is as follows. F(1)F(0) ATP synthase produces ATP from ADP in the presence of a proton or sodium gradient. F-type ATPases consist of two structural domains, F(1) containing the extramembraneous catalytic core and F(0) containing the membrane proton channel, linked together by a central stalk and a peripheral stalk. During catalysis, ATP synthesis in the catalytic domain of F(1) is coupled via a rotary mechanism of the central stalk subunits to proton translocation. This protein is part of the stalk that links CF(0) to CF(1). It either transmits conformational changes from CF(0) to CF(1) or is implicated in proton conduction. The protein is ATP synthase subunit delta of Amoebophilus asiaticus (strain 5a2).